The primary structure comprises 728 residues: U-box domain-containing protein 4 (728 aa).

In terms of domain architecture, U-box spans serine 296 to glutamine 370. ARM repeat units follow at residues glycine 441–glycine 483 and glycine 526–alanine 568.

It catalyses the reaction S-ubiquitinyl-[E2 ubiquitin-conjugating enzyme]-L-cysteine + [acceptor protein]-L-lysine = [E2 ubiquitin-conjugating enzyme]-L-cysteine + N(6)-ubiquitinyl-[acceptor protein]-L-lysine.. Its pathway is protein modification; protein ubiquitination. Possesses E3 ubiquitin-protein ligase in vitro. The chain is U-box domain-containing protein 4 (PUB4) from Oryza sativa subsp. japonica (Rice).